A 197-amino-acid chain; its full sequence is Chalcone--flavanone isomerase 2 (197 aa).

Residues threonine 23, asparagine 88, and threonine 165 each coordinate substrate.

Belongs to the chalcone isomerase family.

The enzyme catalyses a chalcone = a flavanone.. It functions in the pathway secondary metabolite biosynthesis; flavonoid biosynthesis. Its function is as follows. Catalyzes the intramolecular cyclization of bicyclic chalcones into tricyclic (S)-flavanones. Responsible for the isomerization of 4,2',4',6'-tetrahydroxychalcone (also termed chalcone) into naringenin. This Medicago sativa (Alfalfa) protein is Chalcone--flavanone isomerase 2 (CHI2).